The primary structure comprises 251 residues: Small ribosomal subunit protein uS2 (251 aa).

It belongs to the universal ribosomal protein uS2 family.

The chain is Small ribosomal subunit protein uS2 from Nitrosomonas eutropha (strain DSM 101675 / C91 / Nm57).